The chain runs to 439 residues: Diaminopimelate decarboxylase (439 aa).

At Lys66 the chain carries N6-(pyridoxal phosphate)lysine. Pyridoxal 5'-phosphate is bound by residues Gly248 and 290 to 293 (EPGR). Residues Arg293, Arg330, and Tyr334 each coordinate substrate. The active-site Proton donor is Cys361. The substrate site is built by Glu362 and Tyr390. Residue Tyr390 participates in pyridoxal 5'-phosphate binding.

This sequence belongs to the Orn/Lys/Arg decarboxylase class-II family. LysA subfamily. As to quaternary structure, homodimer. Requires pyridoxal 5'-phosphate as cofactor.

The catalysed reaction is meso-2,6-diaminopimelate + H(+) = L-lysine + CO2. Its pathway is amino-acid biosynthesis; L-lysine biosynthesis via DAP pathway; L-lysine from DL-2,6-diaminopimelate: step 1/1. Functionally, specifically catalyzes the decarboxylation of meso-diaminopimelate (meso-DAP) to L-lysine. This chain is Diaminopimelate decarboxylase, found in Halalkalibacterium halodurans (strain ATCC BAA-125 / DSM 18197 / FERM 7344 / JCM 9153 / C-125) (Bacillus halodurans).